We begin with the raw amino-acid sequence, 193 residues long: ATP-dependent Clp protease proteolytic subunit (193 aa).

Serine 98 acts as the Nucleophile in catalysis. Histidine 123 is an active-site residue.

It belongs to the peptidase S14 family. Fourteen ClpP subunits assemble into 2 heptameric rings which stack back to back to give a disk-like structure with a central cavity, resembling the structure of eukaryotic proteasomes.

It is found in the cytoplasm. It catalyses the reaction Hydrolysis of proteins to small peptides in the presence of ATP and magnesium. alpha-casein is the usual test substrate. In the absence of ATP, only oligopeptides shorter than five residues are hydrolyzed (such as succinyl-Leu-Tyr-|-NHMec, and Leu-Tyr-Leu-|-Tyr-Trp, in which cleavage of the -Tyr-|-Leu- and -Tyr-|-Trp bonds also occurs).. In terms of biological role, cleaves peptides in various proteins in a process that requires ATP hydrolysis. Has a chymotrypsin-like activity. Plays a major role in the degradation of misfolded proteins. The polypeptide is ATP-dependent Clp protease proteolytic subunit (Clostridium acetobutylicum (strain ATCC 824 / DSM 792 / JCM 1419 / IAM 19013 / LMG 5710 / NBRC 13948 / NRRL B-527 / VKM B-1787 / 2291 / W)).